Here is a 450-residue protein sequence, read N- to C-terminus: Vimentin beta (450 aa).

The interval 1-81 (MSSRTSTSSY…FGLADAINTE (81 aa)) is head. The span at 24 to 38 (STYSSRQYSSPGRTT) shows a compositional bias: polar residues. The segment at 24–56 (STYSSRQYSSPGRTTSRVSYSSASSTSPSLYMS) is disordered. The segment covering 39–56 (SRVSYSSASSTSPSLYMS) has biased composition (low complexity). Residues 82–117 (FKANRTNEKAEMQHVNDRFASYIEEVRFLEQQNKIL) are coil 1A. Positions 89–397 (EKAEMQHVND…NLLEGEEYRI (309 aa)) constitute an IF rod domain. A linker 1 region spans residues 118 to 139 (TAELEQMRGKGSSRVGDLYEDE). Residues 140 to 231 (MRELRRQVDQ…KLHDEELAEL (92 aa)) form a coil 1B region. The interval 232–254 (QMQIQERHVQIDMEVAKPDLTAA) is linker 12. The interval 255–393 (LRDVRQQYET…ATYRNLLEGE (139 aa)) is coil 2. Positions 394-450 (EYRITTPFPNLSSLSLRESMKEIRPAMDSLSKKVVIKTIETRDGHIINQSTQKDNLE) are tail.

This sequence belongs to the intermediate filament family. In terms of assembly, homomer. One of the most prominent phosphoproteins in various cells of mesenchymal origin. Phosphorylation is enhanced during cell division, at which time vimentin filaments are significantly reorganized. In terms of tissue distribution, expressed in low amounts in retina, optic nerve, brain, and spinal cord and in very high amounts in eye lens.

In terms of biological role, vimentins are class-III intermediate filaments found in various non-epithelial cells, especially mesenchymal cells. Vimentin is attached to the nucleus, endoplasmic reticulum, and mitochondria, either laterally or terminally. The polypeptide is Vimentin beta (Carassius auratus (Goldfish)).